A 210-amino-acid polypeptide reads, in one-letter code: uncharacterized protein (210 aa).

The first 17 residues, 1–17 (MKRTAVSLCLLTGLLSG), serve as a signal peptide directing secretion. Residue C18 is the site of N-palmitoyl cysteine attachment. C18 is lipidated: S-diacylglycerol cysteine. Residues 176–195 (EMKTSPQGSPVSENENANGE) are compositionally biased toward polar residues. Residues 176 to 210 (EMKTSPQGSPVSENENANGETRQDMKIDRNDKNAR) are disordered. Residues 196 to 210 (TRQDMKIDRNDKNAR) are compositionally biased toward basic and acidic residues.

Its subcellular location is the cell membrane. This is an uncharacterized protein from Bacillus subtilis (strain 168).